Here is a 119-residue protein sequence, read N- to C-terminus: Holo-[acyl-carrier-protein] synthase (119 aa).

Residues Asp7 and Glu53 each contribute to the Mg(2+) site.

This sequence belongs to the P-Pant transferase superfamily. AcpS family. Mg(2+) serves as cofactor.

The protein localises to the cytoplasm. The enzyme catalyses apo-[ACP] + CoA = holo-[ACP] + adenosine 3',5'-bisphosphate + H(+). Its function is as follows. Transfers the 4'-phosphopantetheine moiety from coenzyme A to a Ser of acyl-carrier-protein. This is Holo-[acyl-carrier-protein] synthase from Dehalococcoides mccartyi (strain CBDB1).